Here is a 283-residue protein sequence, read N- to C-terminus: Phytanoyl-CoA dioxygenase (283 aa).

Residues K99, M138, 153-155 (HQD), and W170 contribute to the 2-oxoglutarate site. 2 residues coordinate Fe cation: H153 and D155. H238 is a binding site for Fe cation. 2-oxoglutarate contacts are provided by S240 and R249.

Belongs to the PhyH family. The cofactor is Fe cation. Requires L-ascorbate as cofactor.

The enzyme catalyses phytanoyl-CoA + 2-oxoglutarate + O2 = 2-hydroxyphytanoyl-CoA + succinate + CO2. The protein operates within lipid metabolism; fatty acid metabolism. Its function is as follows. Converts phytanoyl-CoA to 2-hydroxyphytanoyl-CoA. This chain is Phytanoyl-CoA dioxygenase, found in Arabidopsis thaliana (Mouse-ear cress).